We begin with the raw amino-acid sequence, 775 residues long: Phenylalanine--tRNA ligase beta subunit (775 aa).

The tRNA-binding domain occupies 39-147 (GIDLDGVVFG…EDFKPGTDAN (109 aa)). One can recognise a B5 domain in the interval 394–470 (YKPKKVFLPQ…RVKGYEHYTS (77 aa)). Asp448, Asp454, Glu457, and Glu458 together coordinate Mg(2+). The FDX-ACB domain occupies 681–774 (AKFPPVVRDI…LKEKYGVELR (94 aa)).

Belongs to the phenylalanyl-tRNA synthetase beta subunit family. Type 1 subfamily. As to quaternary structure, tetramer of two alpha and two beta subunits. The cofactor is Mg(2+).

It localises to the cytoplasm. It carries out the reaction tRNA(Phe) + L-phenylalanine + ATP = L-phenylalanyl-tRNA(Phe) + AMP + diphosphate + H(+). The polypeptide is Phenylalanine--tRNA ligase beta subunit (pheT) (Aquifex aeolicus (strain VF5)).